The sequence spans 284 residues: Undecaprenyl-diphosphatase (284 aa).

Transmembrane regions (helical) follow at residues 7-27 (IILG…TGHL), 44-64 (EMFD…LYFH), 90-110 (LWLK…PLND), 116-136 (FYHF…FIVI), 167-187 (VLSL…ALLI), 197-217 (FTFF…ILHF), 229-249 (FGVL…AIKF), and 259-279 (FTFF…YAAF).

The protein belongs to the UppP family.

The protein resides in the cell membrane. It carries out the reaction di-trans,octa-cis-undecaprenyl diphosphate + H2O = di-trans,octa-cis-undecaprenyl phosphate + phosphate + H(+). In terms of biological role, catalyzes the dephosphorylation of undecaprenyl diphosphate (UPP). Confers resistance to bacitracin. This Lactococcus lactis subsp. cremoris (strain MG1363) protein is Undecaprenyl-diphosphatase.